An 801-amino-acid polypeptide reads, in one-letter code: Phenylalanine--tRNA ligase beta subunit (801 aa).

The tRNA-binding domain maps to 39-154; it reads LKMPQKVVVG…GHLELGVELG (116 aa). Positions 398–475 constitute a B5 domain; sequence IDEITIKTTF…RIYGIDNVSS (78 aa). Mg(2+)-binding residues include D453, D459, E462, and E463. Residues 708–800 form the FDX-ACB domain; the sequence is SKYQKSTRDL…LVREFDAVLR (93 aa).

The protein belongs to the phenylalanyl-tRNA synthetase beta subunit family. Type 1 subfamily. In terms of assembly, tetramer of two alpha and two beta subunits. Mg(2+) is required as a cofactor.

It is found in the cytoplasm. The enzyme catalyses tRNA(Phe) + L-phenylalanine + ATP = L-phenylalanyl-tRNA(Phe) + AMP + diphosphate + H(+). This Helicobacter hepaticus (strain ATCC 51449 / 3B1) protein is Phenylalanine--tRNA ligase beta subunit.